Consider the following 210-residue polypeptide: Adenylate kinase (210 aa).

An ATP-binding site is contributed by 10 to 15 (GSGKGT). The segment at 28–57 (SVGKVLRTVMESNTAEADVVKKFIKSGKLV) is NMP. AMP is bound by residues R34, 55–57 (KLV), 83–86 (GYPR), and Q90. An LID region spans residues 120 to 158 (GRISCTDCGTIYNKLYCMPKINGVCDICNSSSFQNRVDD). R121 contributes to the ATP binding site. Zn(2+) is bound by residues C124 and C127. 130–131 (IY) is a binding site for ATP. The Zn(2+) site is built by C144 and C147. The AMP site is built by R155 and R166. Q194 is a binding site for ATP.

This sequence belongs to the adenylate kinase family. As to quaternary structure, monomer.

The protein resides in the cytoplasm. It carries out the reaction AMP + ATP = 2 ADP. The protein operates within purine metabolism; AMP biosynthesis via salvage pathway; AMP from ADP: step 1/1. In terms of biological role, catalyzes the reversible transfer of the terminal phosphate group between ATP and AMP. Plays an important role in cellular energy homeostasis and in adenine nucleotide metabolism. In Orientia tsutsugamushi (strain Boryong) (Rickettsia tsutsugamushi), this protein is Adenylate kinase.